A 159-amino-acid chain; its full sequence is uncharacterized protein (159 aa).

Over residues 1 to 13 the composition is skewed to basic and acidic residues; sequence MESRPSGRQHASE. Residues 1–35 are disordered; the sequence is MESRPSGRQHASEGDGDQSPTQCAGMRSSGRSDQP.

This is an uncharacterized protein from Homo sapiens (Human).